Consider the following 625-residue polypeptide: Coagulation factor XI (625 aa).

An N-terminal signal peptide occupies residues M1–G18. Apple domains lie at C20 to C103, C110 to C193, C200 to C283, and C291 to C374. Disulfide bonds link C20/C103, C46/C76, C50/C56, C110/C193, C136/C165, C140/C146, C200/C283, C226/C255, C230/C236, C291/C374, C317/C346, C321/C327, C380/C500, C416/C432, C514/C581, C545/C560, and C571/C599. Residues N90 and N126 are each glycosylated (N-linked (GlcNAc...) (complex) asparagine). Residue N163 is glycosylated (N-linked (GlcNAc...) (complex) asparagine; atypical). Residues I388–Q623 enclose the Peptidase S1 domain. H431 functions as the Charge relay system in the catalytic mechanism. Residue N450 is glycosylated (N-linked (GlcNAc...) (complex) asparagine). Residue D480 is the Charge relay system of the active site. Residue N491 is glycosylated (N-linked (GlcNAc...) (complex) asparagine). Residue K547–R550 participates in heparin binding. The active-site Charge relay system is S575.

The protein belongs to the peptidase S1 family. Plasma kallikrein subfamily. Homodimer; disulfide-linked. Can form non-covalently bonded homodimers. After activation the heavy and light chains are also linked by a disulfide bond. Interacts (activated) with F9 (inactive and activated) in calcium-dependent manner. Forms a heterodimer with SERPINA5. Interacts with Anopheles gambiae D7L2. Interacts (activated) with guianensin, an anticoagulant protein from Simulium guianense saliva. Post-translationally, N-glycosylated on both chains. N-glycosylated sites mainly consist of nonfucosylated sialylated biantennary (in high abundance) and/or triantennary (in low abundance) complex structures. Glycosylation at Asn-163 uses a rare non-canonical Asn-X-Cys glycosite. Activated by factor XIIa (or XII), which cleaves each polypeptide after Arg-387 into the light chain, which contains the active site, and the heavy chain, which associates with high molecular weight (HMW) kininogen. Activated by F12 (activated); the presence of negatively charged surfaces accelerates activation. Activated by F2 (thrombin); the presence of negatively charged surfaces, such as polyphosphate and dextran sulfate, strongly accelerates activation. Autoactivated; the presence of negatively charged surfaces, such as polyphosphate and dextran sulfate, accelerates autoactivation and autolysis. As to expression, isoform 2 is produced by platelets and megakaryocytes but absent from other blood cells.

It localises to the secreted. It carries out the reaction Selective cleavage of Arg-|-Ala and Arg-|-Val bonds in factor IX to form factor IXa.. Its activity is regulated as follows. Inhibited by SERPINA5. Its function is as follows. Factor XI triggers the middle phase of the intrinsic pathway of blood coagulation by activating factor IX. The chain is Coagulation factor XI (F11) from Homo sapiens (Human).